A 576-amino-acid polypeptide reads, in one-letter code: Deformed epidermal autoregulatory factor 1 (576 aa).

Disordered regions lie at residues 52–76 (VTSSSNDNSGSGGASGGTSGAGGGN), 189–215 (AGGASGVGGGGGGTGGGSSGWSENPST), and 309–362 (ESAS…SGSG). Gly residues-rich tracts occupy residues 61 to 76 (GSGGASGGTSGAGGGN) and 191 to 207 (GASGVGGGGGGTGGGSS). Residues 210–291 (SENPSTQHNE…QSLIDEGTLT (82 aa)) enclose the SAND domain. Residues 324-340 (RKRNQTDLDMESGPKRK) carry the Nuclear localization signal motif. The span at 345 to 362 (HSNNNNSNTNNNNTSGSG) shows a compositional bias: low complexity. Residues cysteine 521, cysteine 524, cysteine 532, cysteine 535, cysteine 541, cysteine 545, histidine 553, and cysteine 557 each coordinate Zn(2+). An MYND-type zinc finger spans residues 521–557 (CANCNREALAECSLCRKTPYCSEFCQRKDWNAHQVEC).

It is found in the nucleus. In terms of biological role, transcription factor that binds the homeotic Deformed (Dfd) response element. High affinity binding sites contain at least 1 TTCG motif surrounded by additional TCG sequences. May be involved in the selective action of Dfd on these sites without binding directly to the Dfd protein. Requirement of DEAF1 activity may be a common feature of enhancers targeted by Dfd. The chain is Deformed epidermal autoregulatory factor 1 (Deaf1) from Drosophila melanogaster (Fruit fly).